The following is a 638-amino-acid chain: Fructose-1,6-bisphosphatase class 3 (638 aa).

It belongs to the FBPase class 3 family. Requires Mn(2+) as cofactor.

It catalyses the reaction beta-D-fructose 1,6-bisphosphate + H2O = beta-D-fructose 6-phosphate + phosphate. The protein operates within carbohydrate biosynthesis; gluconeogenesis. The protein is Fructose-1,6-bisphosphatase class 3 of Pediococcus pentosaceus (strain ATCC 25745 / CCUG 21536 / LMG 10740 / 183-1w).